The chain runs to 157 residues: 2-C-methyl-D-erythritol 2,4-cyclodiphosphate synthase (157 aa).

2 residues coordinate a divalent metal cation: Asp-8 and His-10. 4-CDP-2-C-methyl-D-erythritol 2-phosphate contacts are provided by residues 8 to 10 and 34 to 35; these read DVH and HS. An a divalent metal cation-binding site is contributed by His-42. 4-CDP-2-C-methyl-D-erythritol 2-phosphate-binding positions include 56 to 58, 61 to 65, 132 to 135, and Phe-139; these read DIG, FPDTD, and TTEE.

Belongs to the IspF family. In terms of assembly, homotrimer. Requires a divalent metal cation as cofactor.

The catalysed reaction is 4-CDP-2-C-methyl-D-erythritol 2-phosphate = 2-C-methyl-D-erythritol 2,4-cyclic diphosphate + CMP. The protein operates within isoprenoid biosynthesis; isopentenyl diphosphate biosynthesis via DXP pathway; isopentenyl diphosphate from 1-deoxy-D-xylulose 5-phosphate: step 4/6. Its function is as follows. Involved in the biosynthesis of isopentenyl diphosphate (IPP) and dimethylallyl diphosphate (DMAPP), two major building blocks of isoprenoid compounds. Catalyzes the conversion of 4-diphosphocytidyl-2-C-methyl-D-erythritol 2-phosphate (CDP-ME2P) to 2-C-methyl-D-erythritol 2,4-cyclodiphosphate (ME-CPP) with a corresponding release of cytidine 5-monophosphate (CMP). This is 2-C-methyl-D-erythritol 2,4-cyclodiphosphate synthase from Clostridium botulinum (strain Alaska E43 / Type E3).